A 193-amino-acid chain; its full sequence is dCTP deaminase (193 aa).

Residues 110–115, Asp-128, 136–138, Tyr-171, Lys-178, and Gln-182 contribute to the dCTP site; these read RSSLAR and VLE. Glu-138 functions as the Proton donor/acceptor in the catalytic mechanism. The tract at residues 169 to 193 is disordered; sequence RPYNRREDAKYRNQQGAVASRIDKD.

The protein belongs to the dCTP deaminase family. In terms of assembly, homotrimer.

It carries out the reaction dCTP + H2O + H(+) = dUTP + NH4(+). The protein operates within pyrimidine metabolism; dUMP biosynthesis; dUMP from dCTP (dUTP route): step 1/2. Catalyzes the deamination of dCTP to dUTP. The protein is dCTP deaminase of Sodalis glossinidius (strain morsitans).